A 205-amino-acid polypeptide reads, in one-letter code: Ras-related protein RABC2b (205 aa).

Residue 20 to 27 (GDSGVGKS) participates in GTP binding. Residues 41-49 (LAPTIGVDF) carry the Effector region motif. GTP-binding positions include 67–71 (DTAGQ), 127–130 (NKVD), and 157–158 (SA). Residues Cys202 and Cys203 are each lipidated (S-geranylgeranyl cysteine).

This sequence belongs to the small GTPase superfamily. Rab family.

It localises to the cell membrane. Functionally, intracellular vesicle trafficking and protein transport. The polypeptide is Ras-related protein RABC2b (RABC2B) (Arabidopsis thaliana (Mouse-ear cress)).